The following is a 351-amino-acid chain: Anthranilate phosphoribosyltransferase (351 aa).

5-phospho-alpha-D-ribose 1-diphosphate-binding positions include Gly-80, 83-84, Thr-88, 90-93, 108-116, and Ser-120; these read GD, NIST, and KHGNRSVTS. Gly-80 is an anthranilate binding site. Ser-92 lines the Mg(2+) pocket. Asn-111 is a binding site for anthranilate. Arg-166 lines the anthranilate pocket. The Mg(2+) site is built by Asp-229 and Glu-230.

This sequence belongs to the anthranilate phosphoribosyltransferase family. Homodimer. It depends on Mg(2+) as a cofactor.

It catalyses the reaction N-(5-phospho-beta-D-ribosyl)anthranilate + diphosphate = 5-phospho-alpha-D-ribose 1-diphosphate + anthranilate. Its pathway is amino-acid biosynthesis; L-tryptophan biosynthesis; L-tryptophan from chorismate: step 2/5. In terms of biological role, catalyzes the transfer of the phosphoribosyl group of 5-phosphorylribose-1-pyrophosphate (PRPP) to anthranilate to yield N-(5'-phosphoribosyl)-anthranilate (PRA). The chain is Anthranilate phosphoribosyltransferase from Chlorobium phaeovibrioides (strain DSM 265 / 1930) (Prosthecochloris vibrioformis (strain DSM 265)).